Consider the following 547-residue polypeptide: Methyl-accepting chemotaxis citrate transducer (547 aa).

Over 1-5 (MKNIK) the chain is Cytoplasmic. Residues 6–29 (VITGVIATLGIFSALLLVTGILFY) traverse the membrane as a helical segment. Topologically, residues 30–189 (SAVSSDRLNF…ASDQNQSSFT (160 aa)) are periplasmic. Residues 190–213 (QMQWTLGIILLIVLIVLAFIWLGL) form a helical membrane-spanning segment. Topologically, residues 214 to 547 (QRVLLRPLQR…AAEQANWESF (334 aa)) are cytoplasmic. An HAMP domain is found at 215–267 (RVLLRPLQRIMAHIQTIADGDLTHEIEAEGRSEMGQLAAGLKTMQQSLIRTVS). In terms of domain architecture, Methyl-accepting transducer spans 272–501 (NADSIYTGAG…ESAAAAAALE (230 aa)). Gln296 bears the Glutamate methyl ester (Gln) mark. Glu303 bears the Glutamate methyl ester (Glu) mark. Gln310 is modified (glutamate methyl ester (Gln)). A disordered region spans residues 317–336 (QNTDNARQATGLAKTASETA). A glutamate methyl ester (Glu) mark is found at Glu492 and Glu501. A disordered region spans residues 518-547 (KQPRREASPTTLSKGLTPQPAAEQANWESF).

This sequence belongs to the methyl-accepting chemotaxis (MCP) protein family. Methylation level is increased by citrate and decreased by phenol.

The protein resides in the cell inner membrane. Acts as a receptor for citrate and mediates taxis away from phenol. Also mediates an attractant response to metal-citrate complexes. In Salmonella typhimurium (strain LT2 / SGSC1412 / ATCC 700720), this protein is Methyl-accepting chemotaxis citrate transducer (tcp).